The sequence spans 232 residues: Large ribosomal subunit protein uL1 (232 aa).

This sequence belongs to the universal ribosomal protein uL1 family. As to quaternary structure, part of the 50S ribosomal subunit.

Functionally, binds directly to 23S rRNA. The L1 stalk is quite mobile in the ribosome, and is involved in E site tRNA release. Protein L1 is also a translational repressor protein, it controls the translation of the L11 operon by binding to its mRNA. The polypeptide is Large ribosomal subunit protein uL1 (Methylorubrum populi (strain ATCC BAA-705 / NCIMB 13946 / BJ001) (Methylobacterium populi)).